The chain runs to 199 residues: Peroxynitrite isomerase (199 aa).

A GXWXGXG motif is present at residues 20-26; it reads GVWEGSG. Lys158 and His190 together coordinate heme b.

The protein belongs to the nitrobindin family. Homodimer. It depends on heme b as a cofactor.

The catalysed reaction is peroxynitrite = nitrate. Its pathway is nitrogen metabolism. Functionally, heme-binding protein able to scavenge peroxynitrite and to protect free L-tyrosine against peroxynitrite-mediated nitration, by acting as a peroxynitrite isomerase that converts peroxynitrite to nitrate. Therefore, this protein likely plays a role in peroxynitrite sensing and in the detoxification of reactive nitrogen and oxygen species (RNS and ROS, respectively). Is able to bind nitric oxide (NO) in vitro, but may act as a sensor of peroxynitrite levels in vivo. The polypeptide is Peroxynitrite isomerase (Clavibacter sepedonicus (Clavibacter michiganensis subsp. sepedonicus)).